The chain runs to 736 residues: Protein kinase C epsilon type (736 aa).

Residues 1–117 (MVVFNGLLKI…NGSRHFEDWI (117 aa)) form the C2 domain. Ser-62 is subject to Phosphoserine. The Phorbol-ester/DAG-type 1 zinc-finger motif lies at 169–220 (GHKFMATYLRQPTYCSHCRDFIWGVIGKQGYQCQVCTCVVHKRCHELIITKV). Position 228 is a phosphothreonine (Thr-228). Residue Ser-234 is modified to Phosphoserine. A Phorbol-ester/DAG-type 2 zinc finger spans residues 242–292 (PHKFGIHNYKVPTFCDHCGSLLWGLLRQGLQCKVCKMNVHRRCETNVAPNC). Phosphothreonine is present on Thr-309. A disordered region spans residues 310–356 (PDKITNSGQRRKKLIGGAESPQPTSGSSPSEEDRSKSAPTSPCDQEL). 3 positions are modified to phosphoserine: Ser-316, Ser-329, and Ser-337. At Ser-346 the chain carries Phosphoserine; by GSK3-beta. A Phosphothreonine modification is found at Thr-349. Ser-350 is subject to Phosphoserine; by MAPK11 and MAPK14. Ser-368 carries the post-translational modification Phosphoserine; by autocatalysis. Residues 369–397 (FDNRGEEHRAASSTDGQLGSPENGEVRQG) are disordered. Ser-388 carries the phosphoserine modification. The region spanning 407–667 (FNFIKVLGKG…EDAIKQHPFF (261 aa)) is the Protein kinase domain. ATP-binding positions include 413 to 421 (LGKGSFGKV) and Lys-436. Asp-531 acts as the Proton acceptor in catalysis. Phosphothreonine; by PDPK1 is present on Thr-565. In terms of domain architecture, AGC-kinase C-terminal spans 668-736 (KEIDWVLLEQ…FSYFGEDLMP (69 aa)). Residue Thr-702 is modified to Phosphothreonine. Phosphothreonine; by autocatalysis is present on Thr-709. A Phosphoserine; by autocatalysis modification is found at Ser-728.

The protein belongs to the protein kinase superfamily. AGC Ser/Thr protein kinase family. PKC subfamily. In terms of assembly, forms a ternary complex with TRIM63 and RACK1/GN2BL1. Can form a complex with PDLIM5 and N-type calcium channel. Interacts with COPB1. Interacts with DGKQ. Interacts with STAT3. Interacts with YWHAB. Interacts with HSP90AB1; promotes functional activation in a heat shock-dependent manner. Interacts (via phorbol-ester/DAG-type 2 domain) with PRPH and VIM. Interacts with NLRP5/MATER. In terms of processing, phosphorylation on Thr-565 by PDPK1 triggers autophosphorylation on Ser-728. Phosphorylation in the hinge domain at Ser-350 by MAPK11 or MAPK14, Ser-346 by GSK3B and Ser-368 by autophosphorylation is required for interaction with YWHAB. In response to growth factors, phosphorylated at Thr-702 and Ser-728 by the mTORC2 complex, promoting autophosphorylation and activation of PRKCE.

It localises to the cytoplasm. The protein resides in the cytoskeleton. The protein localises to the cell membrane. Its subcellular location is the perinuclear region. It is found in the nucleus. It catalyses the reaction L-seryl-[protein] + ATP = O-phospho-L-seryl-[protein] + ADP + H(+). It carries out the reaction L-threonyl-[protein] + ATP = O-phospho-L-threonyl-[protein] + ADP + H(+). Its activity is regulated as follows. Novel PKCs (PRKCD, PRKCE, PRKCH and PRKCQ) are calcium-insensitive, but activated by diacylglycerol (DAG) and phosphatidylserine. Three specific sites; Thr-565 (activation loop of the kinase domain), Thr-709 (turn motif) and Ser-728 (hydrophobic region), need to be phosphorylated for its full activation. Its function is as follows. Calcium-independent, phospholipid- and diacylglycerol (DAG)-dependent serine/threonine-protein kinase that plays essential roles in the regulation of multiple cellular processes linked to cytoskeletal proteins, such as cell adhesion, motility, migration and cell cycle, functions in neuron growth and ion channel regulation, and is involved in immune response, cancer cell invasion and regulation of apoptosis. Mediates cell adhesion to the extracellular matrix via integrin-dependent signaling, by mediating angiotensin-2-induced activation of integrin beta-1 (ITGB1) in cardiac fibroblasts. Phosphorylates MARCKS, which phosphorylates and activates PTK2/FAK, leading to the spread of cardiomyocytes. Involved in the control of the directional transport of ITGB1 in mesenchymal cells by phosphorylating vimentin (VIM), an intermediate filament (IF) protein. In epithelial cells, associates with and phosphorylates keratin-8 (KRT8), which induces targeting of desmoplakin at desmosomes and regulates cell-cell contact. Phosphorylates IQGAP1, which binds to CDC42, mediating epithelial cell-cell detachment prior to migration. During cytokinesis, forms a complex with YWHAB, which is crucial for daughter cell separation, and facilitates abscission by a mechanism which may implicate the regulation of RHOA. In cardiac myocytes, regulates myofilament function and excitation coupling at the Z-lines, where it is indirectly associated with F-actin via interaction with COPB1. During endothelin-induced cardiomyocyte hypertrophy, mediates activation of PTK2/FAK, which is critical for cardiomyocyte survival and regulation of sarcomere length. Plays a role in the pathogenesis of dilated cardiomyopathy via persistent phosphorylation of troponin I (TNNI3). Involved in nerve growth factor (NFG)-induced neurite outgrowth and neuron morphological change independently of its kinase activity, by inhibition of RHOA pathway, activation of CDC42 and cytoskeletal rearrangement. May be involved in presynaptic facilitation by mediating phorbol ester-induced synaptic potentiation. Phosphorylates gamma-aminobutyric acid receptor subunit gamma-2 (GABRG2), which reduces the response of GABA receptors to ethanol and benzodiazepines and may mediate acute tolerance to the intoxicating effects of ethanol. Upon PMA treatment, phosphorylates the capsaicin- and heat-activated cation channel TRPV1, which is required for bradykinin-induced sensitization of the heat response in nociceptive neurons. Is able to form a complex with PDLIM5 and N-type calcium channel, and may enhance channel activities and potentiates fast synaptic transmission by phosphorylating the pore-forming alpha subunit CACNA1B (CaV2.2). Downstream of TLR4, plays an important role in the lipopolysaccharide (LPS)-induced immune response by phosphorylating and activating TICAM2/TRAM, which in turn activates the transcription factor IRF3 and subsequent cytokines production. In differentiating erythroid progenitors, is regulated by EPO and controls the protection against the TNFSF10/TRAIL-mediated apoptosis, via BCL2. May be involved in the regulation of the insulin-induced phosphorylation and activation of AKT1. Phosphorylates NLRP5/MATER and may thereby modulate AKT pathway activation in cumulus cells. Phosphorylates and activates LRRK1, which phosphorylates RAB proteins involved in intracellular trafficking. This chain is Protein kinase C epsilon type (PRKCE), found in Oryctolagus cuniculus (Rabbit).